The chain runs to 427 residues: ATP-dependent RNA helicase DDX39A (427 aa).

Positions 1–19 (MAEQDVENELLDYDEDEEP) are enriched in acidic residues. A disordered region spans residues 1–36 (MAEQDVENELLDYDEDEEPQAPQESTPAPPKKDVKG). Ala2 is modified (N-acetylalanine). Lys31 participates in a covalent cross-link: Glycyl lysine isopeptide (Lys-Gly) (interchain with G-Cter in SUMO2). Position 35 is an N6-acetyllysine; alternate (Lys35). A Glycyl lysine isopeptide (Lys-Gly) (interchain with G-Cter in SUMO2); alternate cross-link involves residue Lys35. Position 37 is a phosphoserine (Ser37). The Q motif motif lies at 44 to 72 (SGFRDFLLKPELLRAIVDCGFEHPSEVQH). In terms of domain architecture, Helicase ATP-binding spans 75 to 248 (IPQAILGMDV…RKFMQDPMEV (174 aa)). 88–95 (AKSGMGKT) serves as a coordination point for ATP. Glycyl lysine isopeptide (Lys-Gly) (interchain with G-Cter in SUMO2) cross-links involve residues Lys154 and Lys162. Residue Thr171 is modified to Phosphothreonine. The DECD box signature appears at 195-198 (DECD). Residues Lys240 and Lys255 each participate in a glycyl lysine isopeptide (Lys-Gly) (interchain with G-Cter in SUMO2) cross-link. Positions 260-421 (GLQQYYVKLK…ELPEEIDIST (162 aa)) constitute a Helicase C-terminal domain. Phosphoserine is present on Ser426.

The protein belongs to the DEAD box helicase family. DECD subfamily. In terms of assembly, binds ALYREF/THOC4 and DDX39B/BAT1. Interacts with the apo-AREX complex component SARNP. Interacts with MX1. Interacts with MCM3AP isoform GANP. Interacts with ECD. Interacts with PHAX; this interaction stimulates PHAX RNA binding activity. In terms of processing, SUMOylated by RANBP2; SUMOylation modification affects its ability to bind RNA.

The protein resides in the nucleus. Its subcellular location is the cytoplasm. It catalyses the reaction ATP + H2O = ADP + phosphate + H(+). Helicase that plays an essential role in mRNA export and is involved in multiple steps in RNA metabolism including alternative splicing. Regulates nuclear mRNA export to the cytoplasm through association with ECD. Also involved in spliceosomal uridine-rich small nuclear RNA (U snRNA) export by stimulating the RNA binding of adapter PHAX. Plays a role in the negative regulation of type I IFN production by increasing the nuclear retention of antiviral transcripts and thus reducing their protein expression. Independently of the interferon pathway, plays an antiviral role against alphaviruses by binding to a 5' conserved sequence element in the viral genomic RNA. The chain is ATP-dependent RNA helicase DDX39A from Mus musculus (Mouse).